Consider the following 232-residue polypeptide: Phosphatidylserine decarboxylase proenzyme (232 aa).

Catalysis depends on S190, which acts as the Schiff-base intermediate with substrate; via pyruvic acid. At S190 the chain carries Pyruvic acid (Ser); by autocatalysis.

The protein belongs to the phosphatidylserine decarboxylase family. PSD-A subfamily. In terms of assembly, heterodimer of a large membrane-associated beta subunit and a small pyruvoyl-containing alpha subunit. Pyruvate is required as a cofactor. In terms of processing, is synthesized initially as an inactive proenzyme. Formation of the active enzyme involves a self-maturation process in which the active site pyruvoyl group is generated from an internal serine residue via an autocatalytic post-translational modification. Two non-identical subunits are generated from the proenzyme in this reaction, and the pyruvate is formed at the N-terminus of the alpha chain, which is derived from the carboxyl end of the proenzyme. The post-translation cleavage follows an unusual pathway, termed non-hydrolytic serinolysis, in which the side chain hydroxyl group of the serine supplies its oxygen atom to form the C-terminus of the beta chain, while the remainder of the serine residue undergoes an oxidative deamination to produce ammonia and the pyruvoyl prosthetic group on the alpha chain.

It localises to the cell membrane. It catalyses the reaction a 1,2-diacyl-sn-glycero-3-phospho-L-serine + H(+) = a 1,2-diacyl-sn-glycero-3-phosphoethanolamine + CO2. The protein operates within phospholipid metabolism; phosphatidylethanolamine biosynthesis; phosphatidylethanolamine from CDP-diacylglycerol: step 2/2. Functionally, catalyzes the formation of phosphatidylethanolamine (PtdEtn) from phosphatidylserine (PtdSer). The chain is Phosphatidylserine decarboxylase proenzyme from Rhizobium johnstonii (strain DSM 114642 / LMG 32736 / 3841) (Rhizobium leguminosarum bv. viciae).